Here is a 156-residue protein sequence, read N- to C-terminus: Single-stranded DNA-binding protein 1 (156 aa).

The SSB domain occupies 1–104; it reads MLNRTILVGR…VVADSIQFLE (104 aa). Positions 122–146 are disordered; the sequence is QTRGQSQYSNNKPVKDNPFANANCP.

Homotetramer.

The polypeptide is Single-stranded DNA-binding protein 1 (ssb1) (Staphylococcus aureus (strain MSSA476)).